Consider the following 472-residue polypeptide: uncharacterized protein (472 aa).

The protein belongs to the AllG family.

This is an uncharacterized protein from Escherichia coli (strain K12).